A 97-amino-acid polypeptide reads, in one-letter code: Large ribosomal subunit protein bL27 (97 aa).

The propeptide occupies 1–12; it reads MLKMTLNNLQLF. The segment at 13-37 is disordered; sequence AHKKGGGSTSNGRDSQAKRLGAKAA.

This sequence belongs to the bacterial ribosomal protein bL27 family. Post-translationally, the N-terminus is cleaved by ribosomal processing cysteine protease Prp.

The sequence is that of Large ribosomal subunit protein bL27 from Streptococcus pneumoniae serotype 2 (strain D39 / NCTC 7466).